A 169-amino-acid polypeptide reads, in one-letter code: SsrA-binding protein (169 aa).

It belongs to the SmpB family.

It localises to the cytoplasm. In terms of biological role, required for rescue of stalled ribosomes mediated by trans-translation. Binds to transfer-messenger RNA (tmRNA), required for stable association of tmRNA with ribosomes. tmRNA and SmpB together mimic tRNA shape, replacing the anticodon stem-loop with SmpB. tmRNA is encoded by the ssrA gene; the 2 termini fold to resemble tRNA(Ala) and it encodes a 'tag peptide', a short internal open reading frame. During trans-translation Ala-aminoacylated tmRNA acts like a tRNA, entering the A-site of stalled ribosomes, displacing the stalled mRNA. The ribosome then switches to translate the ORF on the tmRNA; the nascent peptide is terminated with the 'tag peptide' encoded by the tmRNA and targeted for degradation. The ribosome is freed to recommence translation, which seems to be the essential function of trans-translation. In Mycolicibacterium paratuberculosis (strain ATCC BAA-968 / K-10) (Mycobacterium paratuberculosis), this protein is SsrA-binding protein.